The following is a 388-amino-acid chain: Beta-lactamase (388 aa).

A signal peptide spans 1–24 (MMKKSIINTLIFTSIATFPLYTLA). Ser89 (acyl-ester intermediate) is an active-site residue. The Proton acceptor role is filled by Tyr175. 342 to 344 (KTG) is a substrate binding site.

This sequence belongs to the class-C beta-lactamase family.

The protein resides in the periplasm. The catalysed reaction is a beta-lactam + H2O = a substituted beta-amino acid. This protein is a serine beta-lactamase with a substrate specificity for cephalosporins. This chain is Beta-lactamase (ampC), found in Yersinia enterocolitica.